The chain runs to 317 residues: Ribosomal RNA small subunit methyltransferase H (317 aa).

S-adenosyl-L-methionine-binding positions include 39 to 41, Asp59, Phe83, Asp104, and Gln111; that span reads GGH.

Belongs to the methyltransferase superfamily. RsmH family.

It localises to the cytoplasm. It carries out the reaction cytidine(1402) in 16S rRNA + S-adenosyl-L-methionine = N(4)-methylcytidine(1402) in 16S rRNA + S-adenosyl-L-homocysteine + H(+). In terms of biological role, specifically methylates the N4 position of cytidine in position 1402 (C1402) of 16S rRNA. This Paraburkholderia phymatum (strain DSM 17167 / CIP 108236 / LMG 21445 / STM815) (Burkholderia phymatum) protein is Ribosomal RNA small subunit methyltransferase H.